The following is a 269-amino-acid chain: Tryptophan synthase alpha chain (269 aa).

Catalysis depends on proton acceptor residues E49 and D60.

This sequence belongs to the TrpA family. Tetramer of two alpha and two beta chains.

It carries out the reaction (1S,2R)-1-C-(indol-3-yl)glycerol 3-phosphate + L-serine = D-glyceraldehyde 3-phosphate + L-tryptophan + H2O. It functions in the pathway amino-acid biosynthesis; L-tryptophan biosynthesis; L-tryptophan from chorismate: step 5/5. The alpha subunit is responsible for the aldol cleavage of indoleglycerol phosphate to indole and glyceraldehyde 3-phosphate. This chain is Tryptophan synthase alpha chain, found in Delftia acidovorans (strain DSM 14801 / SPH-1).